The primary structure comprises 442 residues: Decapping and exoribonuclease protein 1 (442 aa).

Residues 31-40 (QSKLCKEKTT) show a composition bias toward basic and acidic residues. The tract at residues 31-56 (QSKLCKEKTTSDSSSSRKPSQQRDNY) is disordered. The segment covering 41-53 (SDSSSSRKPSQQR) has biased composition (low complexity). A substrate-binding site is contributed by R101. Residue E255 participates in a divalent metal cation binding. Residue E293 coordinates substrate. A divalent metal cation is bound by residues D295, E306, and L307. Positions 308 and 330 each coordinate substrate.

The protein belongs to the DXO/Dom3Z family. A divalent metal cation serves as cofactor.

The protein resides in the cytoplasm. The catalysed reaction is a 5'-end NAD(+)-phospho-ribonucleoside in mRNA + H2O = a 5'-end phospho-ribonucleoside in mRNA + NAD(+) + H(+). It carries out the reaction a 5'-end (N(7)-methyl 5'-triphosphoguanosine)-ribonucleoside-ribonucleotide in mRNA + H2O = a (N(7)-methyl 5'-triphosphoguanosine)-nucleoside + a 5'-end phospho-ribonucleoside in mRNA + H(+). Its function is as follows. Decapping enzyme for NAD-capped RNAs: specifically hydrolyzes the nicotinamide adenine dinucleotide (NAD) cap from a subset of RNAs by removing the entire NAD moiety from the 5'-end of an NAD-capped RNA. The NAD-cap is present at the 5'-end of some RNAs and snoRNAs. In contrast to the canonical 5'-end N7 methylguanosine (m7G) cap, the NAD cap promotes mRNA decay. Also acts as a non-canonical decapping enzyme that removes the entire cap structure of m7G capped or incompletely capped RNAs. Has decapping activity toward incomplete 5'-end m7G cap mRNAs such as unmethylated 5'-end-capped RNA (cap0), while it has no activity toward 2'-O-ribose methylated m7G cap (cap1). Also has 5'-3' exonuclease activity. The sequence is that of Decapping and exoribonuclease protein 1 (DXO1) from Saccharomyces cerevisiae (strain ATCC 204508 / S288c) (Baker's yeast).